Reading from the N-terminus, the 112-residue chain is uncharacterized protein (112 aa).

2 coiled-coil regions span residues 15–53 (AEKK…FFKF) and 86–103 (LDYE…TERK).

This is an uncharacterized protein from Aquifex aeolicus (strain VF5).